Consider the following 48-residue polypeptide: M-oxotoxin-Ot1c (48 aa).

It is found in the secreted. It localises to the target cell membrane. Functionally, disrupts cell membranes, particularly those rich in phosphocholine, through formation of pores. Has antimicrobial activity, hemolytic activity and insecticidal activity. The protein is M-oxotoxin-Ot1c of Oxyopes takobius (Lynx spider).